A 517-amino-acid polypeptide reads, in one-letter code: Crotonobetaine/carnitine--CoA ligase (517 aa).

The protein belongs to the ATP-dependent AMP-binding enzyme family.

It carries out the reaction 4-(trimethylamino)butanoate + ATP + CoA = 4-(trimethylamino)butanoyl-CoA + AMP + diphosphate. It catalyses the reaction crotonobetaine + ATP + CoA = crotonobetainyl-CoA + AMP + diphosphate. The catalysed reaction is (R)-carnitine + ATP + CoA = (R)-carnitinyl-CoA + AMP + diphosphate. It participates in amine and polyamine metabolism; carnitine metabolism. Its function is as follows. Catalyzes the transfer of CoA to carnitine, generating the initial carnitinyl-CoA needed for the CaiB reaction cycle. Also has activity toward crotonobetaine and gamma-butyrobetaine. This chain is Crotonobetaine/carnitine--CoA ligase, found in Escherichia coli O17:K52:H18 (strain UMN026 / ExPEC).